A 157-amino-acid polypeptide reads, in one-letter code: Endoribonuclease YbeY (157 aa).

3 residues coordinate Zn(2+): His118, His122, and His128.

Belongs to the endoribonuclease YbeY family. Zn(2+) serves as cofactor.

The protein localises to the cytoplasm. Its function is as follows. Single strand-specific metallo-endoribonuclease involved in late-stage 70S ribosome quality control and in maturation of the 3' terminus of the 16S rRNA. The polypeptide is Endoribonuclease YbeY (Shewanella loihica (strain ATCC BAA-1088 / PV-4)).